Here is a 278-residue protein sequence, read N- to C-terminus: Large ribosomal subunit protein uL2 (278 aa).

The tract at residues 222–278 (GVVMNPIDHPHGGGEGRTSGGRHPVTPWGKPTKGKKTRSNKSTNKFILISRHKRKKK) is disordered.

It belongs to the universal ribosomal protein uL2 family. As to quaternary structure, part of the 50S ribosomal subunit. Forms a bridge to the 30S subunit in the 70S ribosome.

One of the primary rRNA binding proteins. Required for association of the 30S and 50S subunits to form the 70S ribosome, for tRNA binding and peptide bond formation. It has been suggested to have peptidyltransferase activity; this is somewhat controversial. Makes several contacts with the 16S rRNA in the 70S ribosome. This Afipia carboxidovorans (strain ATCC 49405 / DSM 1227 / KCTC 32145 / OM5) (Oligotropha carboxidovorans) protein is Large ribosomal subunit protein uL2.